Consider the following 182-residue polypeptide: Protein canopy homolog 2 (182 aa).

The first 20 residues, 1–20, serve as a signal peptide directing secretion; sequence MKGWGWLALLLGALLGTAWA. In terms of domain architecture, Saposin B-type spans 24–175; it reads QDLHCGACRA…KRTDLCDHAL (152 aa). 3 disulfides stabilise this stretch: Cys28–Cys171, Cys31–Cys164, and Cys86–Cys137. Position 115 is a phosphoserine (Ser115). Positions 179–182 match the Prevents secretion from ER motif; the sequence is HDEL.

The protein belongs to the canopy family. Interacts with MYLIP/MIR. Expressed in different tissues. Highest levels are detected in adult placenta, liver and pancreas.

It is found in the endoplasmic reticulum. Its function is as follows. Positive regulator of neurite outgrowth by stabilizing myosin regulatory light chain (MRLC). It prevents MIR-mediated MRLC ubiquitination and its subsequent proteasomal degradation. This chain is Protein canopy homolog 2 (CNPY2), found in Homo sapiens (Human).